A 73-amino-acid chain; its full sequence is Large ribosomal subunit protein bL31 (73 aa).

The protein belongs to the bacterial ribosomal protein bL31 family. Type A subfamily. Part of the 50S ribosomal subunit.

Binds the 23S rRNA. The chain is Large ribosomal subunit protein bL31 from Cereibacter sphaeroides (strain ATCC 17025 / ATH 2.4.3) (Rhodobacter sphaeroides).